We begin with the raw amino-acid sequence, 272 residues long: GATA zinc finger domain-containing protein 1 (272 aa).

The GATA-type zinc-finger motif lies at 9 to 33 (CSVCKTTSSSMWKKGPQGEILCHHC). Residues 67–120 (TFASTSAAPPQSNGGGGGKQSKQEIHRRSARLRNTKYKSAPAAEKKVSTKGKGR) are disordered. At K167 the chain carries N6-acetyllysine. K265 is covalently cross-linked (Glycyl lysine isopeptide (Lys-Gly) (interchain with G-Cter in SUMO2)).

The protein resides in the nucleus. This Bos taurus (Bovine) protein is GATA zinc finger domain-containing protein 1 (GATAD1).